Here is a 500-residue protein sequence, read N- to C-terminus: Anthranilate synthase component 1 (500 aa).

Residues S49 and 276 to 278 (PFM) contribute to the L-tryptophan site. 311–312 (GT) contributes to the chorismate binding site. Position 338 (E338) interacts with Mg(2+). Residues Y426, R446, 460–462 (GGG), and G462 each bind chorismate. A Mg(2+)-binding site is contributed by E475.

Belongs to the anthranilate synthase component I family. In terms of assembly, heterotetramer consisting of two non-identical subunits: a beta subunit (TrpG) and a large alpha subunit (TrpE). Mg(2+) is required as a cofactor.

The enzyme catalyses chorismate + L-glutamine = anthranilate + pyruvate + L-glutamate + H(+). The protein operates within amino-acid biosynthesis; L-tryptophan biosynthesis; L-tryptophan from chorismate: step 1/5. Feedback inhibited by tryptophan. Functionally, part of a heterotetrameric complex that catalyzes the two-step biosynthesis of anthranilate, an intermediate in the biosynthesis of L-tryptophan. In the first step, the glutamine-binding beta subunit (TrpG) of anthranilate synthase (AS) provides the glutamine amidotransferase activity which generates ammonia as a substrate that, along with chorismate, is used in the second step, catalyzed by the large alpha subunit of AS (TrpE) to produce anthranilate. In the absence of TrpG, TrpE can synthesize anthranilate directly from chorismate and high concentrations of ammonia. This is Anthranilate synthase component 1 (trpE) from Cereibacter sphaeroides (strain ATCC 17023 / DSM 158 / JCM 6121 / CCUG 31486 / LMG 2827 / NBRC 12203 / NCIMB 8253 / ATH 2.4.1.) (Rhodobacter sphaeroides).